The primary structure comprises 775 residues: MAALDSLSLFTGLGLSEQKARETLKNTVLSAQLREAATQAQQTLGSSIDKATGTLLYGLASRLRDPRRLSFLVSYITSRKIHTETQLSAALEYVRSHPLDPINTEDFEQECGVGVVVTPEQIEEAVEAAINRHRAKLLVERYHFSMGLLMGEARAALKWADGKMIKHEVDMQVLHLLGPKTETDLEKKPKVAKARPEETDQRTAKDVVENGEVVVQTLSLMEQLRGEALKFHKPGENYKTPGYVTTPHTMDLLKQHLDITGGQVRTRFPPEPNGILHIGHAKAINFNFGYAKANNGICFLRFDDTNPEKEEAKFFTAIYDMVAWLGYTPYKVTYASDYFDQLYAWAVELIRRDQAYVCHQRGEELKGHNPLPSPWRDRPIEESLLLFEAMRKGKFAEGEATLRMKLVMEDGKMDPVAYRVKYTPHHRTGDTWCIYPTYDYTHCLCDSIEHITHSLCTKEFQARRSSYFWLCNALDVYCPVQWEYGRLNLHYAVVSKRKILQLVAAGAVRDWDDPRLFTLTALRRRGFPPEAINNFCARVGVTVAQTTMEPHLLEACVRDVLNDTAPRAMAVLEPLQVVITNFPATKALDIQVPNFPADETKGFHQVPFGSTVFIERMDFKEEPEPGYKRLAWGQPVGLRHTGYVIELQHVVKGPSGCVESLKVTCRRADAGEKPKAFIHWVSQPLTCEIRLYERLFQHKNPEDPAEVPGGFLSDLNPASLQVVEAALVDCSVALAKPFDKFQFERLGYFSVDPDSNQGQLVFNRTVTLKEDPGKV.

N-acetylalanine is present on Ala-2. Ser-70 bears the Phosphoserine mark. The 'HIGH' region signature appears at 270–280; that stretch reads PEPNGILHIGH. ATP-binding positions include 271–273 and 277–283; these read EPN and HIGHAKA. Residue Asp-303 coordinates L-glutamine. Lys-309 is modified (N6-acetyllysine). Residue Tyr-438 coordinates L-glutamine. Residues Thr-457, 486-487, and 494-496 contribute to the ATP site; these read RL and VSK. The 'KMSKS' region signature appears at 493–497; sequence VVSKR. The residue at position 495 (Ser-495) is a Phosphoserine.

The protein belongs to the class-I aminoacyl-tRNA synthetase family. As to quaternary structure, monomer. Part of a multisubunit complex that groups tRNA ligases for Arg (RARS1), Asp (DARS1), Gln (QARS1), Ile (IARS1), Leu (LARS1), Lys (KARS1), Met (MARS1) the bifunctional ligase for Glu and Pro (EPRS1) and the auxiliary subunits AIMP1/p43, AIMP2/p38 and EEF1E1/p18. Interacts with RARS1. Part of a complex composed of RARS1, QARS1 and AIMP1.

It is found in the cytoplasm. The protein localises to the cytosol. It catalyses the reaction tRNA(Gln) + L-glutamine + ATP = L-glutaminyl-tRNA(Gln) + AMP + diphosphate. In terms of biological role, glutamine--tRNA ligase. Plays a critical role in brain development. The sequence is that of Glutamine--tRNA ligase (QARS1) from Bos taurus (Bovine).